The following is a 126-amino-acid chain: Ribosome-binding factor A (126 aa).

The protein belongs to the RbfA family. Monomer. Binds 30S ribosomal subunits, but not 50S ribosomal subunits or 70S ribosomes.

The protein resides in the cytoplasm. Functionally, one of several proteins that assist in the late maturation steps of the functional core of the 30S ribosomal subunit. Associates with free 30S ribosomal subunits (but not with 30S subunits that are part of 70S ribosomes or polysomes). Required for efficient processing of 16S rRNA. May interact with the 5'-terminal helix region of 16S rRNA. The protein is Ribosome-binding factor A of Clostridioides difficile (strain 630) (Peptoclostridium difficile).